Consider the following 296-residue polypeptide: Large ribosomal subunit protein uL29m (296 aa).

The transit peptide at Met-1 to Thr-19 directs the protein to the mitochondrion.

It belongs to the universal ribosomal protein uL29 family. Component of the mitochondrial large ribosomal subunit. Mature mitochondrial ribosomes consist of a small (37S) and a large (54S) subunit. The 37S subunit contains at least 33 different proteins and 1 molecule of RNA (15S). The 54S subunit contains at least 45 different proteins and 1 molecule of RNA (21S).

It is found in the mitochondrion. The sequence is that of Large ribosomal subunit protein uL29m (MRPL4) from Lodderomyces elongisporus (strain ATCC 11503 / CBS 2605 / JCM 1781 / NBRC 1676 / NRRL YB-4239) (Yeast).